The chain runs to 315 residues: Glycine--tRNA ligase alpha subunit (315 aa).

It belongs to the class-II aminoacyl-tRNA synthetase family. Tetramer of two alpha and two beta subunits.

It is found in the cytoplasm. The enzyme catalyses tRNA(Gly) + glycine + ATP = glycyl-tRNA(Gly) + AMP + diphosphate. This chain is Glycine--tRNA ligase alpha subunit, found in Ectopseudomonas mendocina (strain ymp) (Pseudomonas mendocina).